Consider the following 254-residue polypeptide: Very-long-chain (3R)-3-hydroxyacyl-CoA dehydratase 2 (254 aa).

At alanine 2 the chain carries N-acetylalanine. The Cytoplasmic portion of the chain corresponds to 2–41 (AAVAATAAAKGNGGGGGRAGAGDASGTRKKKGPGPLATAY). Residues 11 to 33 (KGNGGGGGRAGAGDASGTRKKKG) are disordered. The segment covering 12–21 (GNGGGGGRAG) has biased composition (gly residues). A helical membrane pass occupies residues 42-60 (LVIYNVVMTAGWLVIAVGL). Residues 61–79 (VRAYLAKGSYHSLYYSIEK) lie on the Lumenal side of the membrane. Residues 80–97 (PLKFFQTGALLEILHCAI) form a helical membrane-spanning segment. The Cytoplasmic segment spans residues 98-107 (GIVPSSVVLT). The chain crosses the membrane as a helical span at residues 108–125 (SFQVMSRVFLIWAVTHSV). The Lumenal segment spans residues 126 to 130 (KEVQS). The chain crosses the membrane as a helical span at residues 131-146 (EDSVLLFVIAWTITEI). Over 147 to 169 (IRYSFYTFSLLNHLPYLIKWARY) the chain is Cytoplasmic. Residues 170 to 187 (TLFIVLYPMGVSGELLTI) traverse the membrane as a helical segment. Active-site residues include tyrosine 176 and glutamate 183. The Lumenal portion of the chain corresponds to 188–217 (YAALPFVRQAGLYSISLPNKYNFSFDYYAF). The tract at residues 198 to 214 (GLYSISLPNKYNFSFDY) is may be involved in interaction with TECR. Asparagine 209 carries N-linked (GlcNAc...) asparagine glycosylation. Residues 218–235 (LILIMISYIPIFPQLYFH) form a helical membrane-spanning segment. The Cytoplasmic segment spans residues 236–254 (MIHQRRKILSHTEEHKKFE).

It belongs to the very long-chain fatty acids dehydratase HACD family. As to quaternary structure, may interact with enzymes of the ELO family (including ELOVL1); with those enzymes that mediate condensation, the first of the four steps of the reaction cycle responsible for fatty acids elongation, may be part of a larger fatty acids elongase complex. Interacts with BCAP31. Interacts (via the third lumenal loop) with TECR. As to expression, highly expressed in testis, spleen, prostate, colon and heart, followed by moderate expression in thymus, ovary, small intestine, peripheral blood leukocytes, liver, skeletal muscle and pancreas. Weakly detected in kidney, placenta, brain and lung.

It localises to the endoplasmic reticulum membrane. It carries out the reaction a very-long-chain (3R)-3-hydroxyacyl-CoA = a very-long-chain (2E)-enoyl-CoA + H2O. It catalyses the reaction (3R)-hydroxyhexadecanoyl-CoA = (2E)-hexadecenoyl-CoA + H2O. The catalysed reaction is (3R)-hydroxyoctadecanoyl-CoA = (2E)-octadecenoyl-CoA + H2O. The enzyme catalyses (3R)-hydroxyeicosanoyl-CoA = (2E)-eicosenoyl-CoA + H2O. It carries out the reaction (3R)-hydroxydocosanoyl-CoA = (2E)-docosenoyl-CoA + H2O. It catalyses the reaction (3R)-hydroxytetracosanoyl-CoA = (2E)-tetracosenoyl-CoA + H2O. The catalysed reaction is (3R)-hydroxyhexacosanoyl-CoA = (2E)-hexacosenoyl-CoA + H2O. The protein operates within lipid metabolism; fatty acid biosynthesis. Its function is as follows. Catalyzes the third of the very long-chain fatty acids (VLCFA) elongation four-step cycle (condensation, reduction, dehydration, and reduction). This endoplasmic reticulum-elongation process is characterized by the addition of two carbons to the lipid chain through each cycle. This enzyme catalyzes the dehydration of the 3-hydroxyacyl-CoA intermediate into trans-2,3-enoyl-CoA, within each cycle of elongation. Therefore, it participates in the production of various VLCFAs involved in multiple biological processes as precursors of membrane lipids and lipid mediators. The protein is Very-long-chain (3R)-3-hydroxyacyl-CoA dehydratase 2 of Homo sapiens (Human).